Consider the following 644-residue polypeptide: Adhesion G-protein coupled receptor F2 (644 aa).

An N-terminal signal peptide occupies residues Met-1–Ser-18. The Extracellular segment spans residues Cys-19 to Tyr-386. Residues Asn-155, Asn-219, Asn-293, and Asn-311 are each glycosylated (N-linked (GlcNAc...) asparagine). The region spanning Ser-233–Glu-377 is the GAIN-B domain. Disulfide bonds link Cys-329–Cys-356 and Cys-344–Cys-358. A GPS region spans residues Cys-329–Glu-377. The helical transmembrane segment at Ile-387–Trp-407 threads the bilayer. Over Ser-408–Cys-422 the chain is Cytoplasmic. Residues Ile-423–Leu-443 form a helical membrane-spanning segment. At Ser-444–Leu-465 the chain is on the extracellular side. Residues Ser-466 to Phe-486 form a helical membrane-spanning segment. Topologically, residues His-487–Cys-493 are cytoplasmic. Residues Leu-494 to Leu-514 traverse the membrane as a helical segment. The Extracellular segment spans residues Ala-515 to Ala-541. Residues Phe-542–Ile-562 traverse the membrane as a helical segment. Topologically, residues Lys-563–Lys-585 are cytoplasmic. Residues Asn-586 to Ile-606 form a helical membrane-spanning segment. Topologically, residues Asn-607–Ser-610 are extracellular. The helical transmembrane segment at Leu-611 to Val-631 threads the bilayer.

Belongs to the G-protein coupled receptor 2 family. Adhesion G-protein coupled receptor (ADGR) subfamily. Mainly expressed in skin and heart, and very weakly in lung and spleen. Detected in all epidermal layers of skin.

Its subcellular location is the membrane. Its function is as follows. Orphan receptor. This chain is Adhesion G-protein coupled receptor F2 (Adgrf2), found in Mus musculus (Mouse).